The following is a 271-amino-acid chain: MASENMTPQDYIGHHLNNLQLDLRTFSLVDPQNPPATFWTINIDSMFFSVVLGLLFLVLFRSVAKKATSGVPGKFQTAIELVIGFVNGSVKDMYHGKSKLIAPLALTIFVWVFLMNLMDLLPIDLLPYIAEHVLGLPALRVVPSADVNVTLSMALGVFILILFYNIKMKGIGGFTKELTLQPFNHWAFIPVNLILEGVSLLSKPVSLGLRLFGNMYAGELIFILIAGLLPWWSQWILNVPWAIFHILIITLQAFIFMVLTIVYLSMASEEH.

A run of 5 helical transmembrane segments spans residues 40 to 60 (TINIDSMFFSVVLGLLFLVLF), 100 to 120 (LIAPLALTIFVWVFLMNLMDL), 146 to 166 (DVNVTLSMALGVFILILFYNI), 220 to 240 (LIFILIAGLLPWWSQWILNVP), and 242 to 262 (AIFHILIITLQAFIFMVLTIV).

It belongs to the ATPase A chain family. In terms of assembly, F-type ATPases have 2 components, CF(1) - the catalytic core - and CF(0) - the membrane proton channel. CF(1) has five subunits: alpha(3), beta(3), gamma(1), delta(1), epsilon(1). CF(0) has three main subunits: a(1), b(2) and c(9-12). The alpha and beta chains form an alternating ring which encloses part of the gamma chain. CF(1) is attached to CF(0) by a central stalk formed by the gamma and epsilon chains, while a peripheral stalk is formed by the delta and b chains.

It is found in the cell inner membrane. Key component of the proton channel; it plays a direct role in the translocation of protons across the membrane. The polypeptide is ATP synthase subunit a (Shigella flexneri).